The chain runs to 1941 residues: Myosin-2 (1941 aa).

The Myosin N-terminal SH3-like domain maps to 33-82 (DAKTSVFVAEPKESFVKGTIQSREGGKVTVKTEGGATLTVKDDQVFPMNP). Phosphothreonine occurs at positions 64 and 69. Positions 86-784 (DKIEDMAMMT…LLGLLEEMRD (699 aa)) constitute a Myosin motor domain. N6,N6,N6-trimethyllysine is present on Lys130. Position 179–186 (179–186 (GESGAGKT)) interacts with ATP. Tyr389 is modified (phosphotyrosine). A Phosphoserine modification is found at Ser392. Thr419 is subject to Phosphothreonine. At Ser625 the chain carries Phosphoserine. The interval 661–683 (LNKLMTNLRSTHPHFVRCIIPNE) is actin-binding. His759 carries the post-translational modification Pros-methylhistidine. The tract at residues 763 to 777 (KFGHTKVFFKAGLLG) is actin-binding. Positions 787–816 (LAQLITRTQARCRGFLARVEYQRMVERREA) constitute an IQ domain. Residues 845 to 1941 (LLKSAETEKE…EVHTKVISEE (1097 aa)) adopt a coiled-coil conformation. Phosphoserine occurs at positions 1094 and 1098. 2 disordered regions span residues 1128 to 1149 (IEAE…SREL) and 1155 to 1174 (RLEE…KKRE). Over residues 1130–1149 (AERASRAKAEKQRSDLSREL) the composition is skewed to basic and acidic residues. Residues Ser1164 and Ser1239 each carry the phosphoserine modification. Thr1243 is subject to Phosphothreonine. At Ser1245 the chain carries Phosphoserine. Position 1257 is a phosphothreonine (Thr1257). Ser1263 is subject to Phosphoserine. A Phosphothreonine modification is found at Thr1288. Phosphoserine occurs at positions 1290, 1294, 1305, and 1308. The residue at position 1469 (Thr1469) is a Phosphothreonine. A Phosphoserine modification is found at Ser1476. Tyr1494 carries the phosphotyrosine modification. Ser1497 is modified (phosphoserine). Thr1503 is subject to Phosphothreonine. Ser1516 carries the phosphoserine modification. The residue at position 1519 (Thr1519) is a Phosphothreonine. Phosphoserine occurs at positions 1556, 1576, 1602, 1605, 1716, and 1728. Residues Thr1732 and Thr1738 each carry the phosphothreonine modification. Ser1741 is subject to Phosphoserine.

The protein belongs to the TRAFAC class myosin-kinesin ATPase superfamily. Myosin family. As to quaternary structure, muscle myosin is a hexameric protein that consists of 2 heavy chain subunits (MHC), 2 alkali light chain subunits (MLC) and 2 regulatory light chain subunits (MLC-2). Interacts with GCSAM.

It localises to the cytoplasm. Its subcellular location is the myofibril. Myosins are actin-based motor molecules with ATPase activity essential for muscle contraction. The sequence is that of Myosin-2 from Homo sapiens (Human).